The chain runs to 287 residues: Octanoyl-[GcvH]:protein N-octanoyltransferase (287 aa).

In terms of domain architecture, BPL/LPL catalytic spans 45 to 253 (GESPATARSW…ELKELSGRLY (209 aa)). Cys150 serves as the catalytic Acyl-thioester intermediate.

This sequence belongs to the octanoyltransferase LipL family.

It carries out the reaction N(6)-octanoyl-L-lysyl-[glycine-cleavage complex H protein] + L-lysyl-[lipoyl-carrier protein] = N(6)-octanoyl-L-lysyl-[lipoyl-carrier protein] + L-lysyl-[glycine-cleavage complex H protein]. It functions in the pathway protein modification; protein lipoylation via endogenous pathway; protein N(6)-(lipoyl)lysine from octanoyl-[acyl-carrier-protein]. Catalyzes the amidotransfer (transamidation) of the octanoyl moiety from octanoyl-GcvH to the lipoyl domain of the E2 subunit of lipoate-dependent enzymes. This chain is Octanoyl-[GcvH]:protein N-octanoyltransferase, found in Bacillus velezensis (strain DSM 23117 / BGSC 10A6 / LMG 26770 / FZB42) (Bacillus amyloliquefaciens subsp. plantarum).